The following is a 232-amino-acid chain: RNA chaperone ProQ (232 aa).

Residues Glu-105–Asp-182 form a disordered region. Over residues Gln-117 to Arg-136 the composition is skewed to basic and acidic residues. The segment covering Arg-137 to Pro-146 has biased composition (basic residues). A compositionally biased stretch (basic and acidic residues) spans Arg-147–His-177.

It belongs to the ProQ family.

The protein localises to the cytoplasm. In terms of biological role, RNA chaperone with significant RNA binding, RNA strand exchange and RNA duplexing activities. May regulate ProP activity through an RNA-based, post-transcriptional mechanism. In Escherichia coli (strain K12), this protein is RNA chaperone ProQ.